The chain runs to 252 residues: Proteasome subunit alpha 1 (252 aa).

At methionine 1 the chain carries N-acetylmethionine; alternate.

The protein belongs to the peptidase T1A family. In terms of assembly, the 20S proteasome core is composed of 14 alpha and 14 beta subunits that assemble into four stacked heptameric rings, resulting in a barrel-shaped structure. The two inner rings, each composed of seven catalytic beta subunits, are sandwiched by two outer rings, each composed of seven alpha subunits. H.volcanii produces at least 2 types of 20S proteasomes: an alpha1-beta proteasome and a proteasome containing all three subunits (alpha1, alpha2, and beta) that appears to be asymmetrical with homo-oligomeric alpha1 and alpha2 rings positioned on separate ends. The catalytic chamber with the active sites is on the inside of the barrel. Has probably a gated structure, the ends of the cylinder being occluded by the N-termini of the alpha-subunits. Is likely capped at one or both ends by the proteasome regulatory ATPase, PAN. Post-translationally, acetylated. The acetylated form at Met-1 was shown to be in 100-fold excess of the unacetylated form with the initiator methionine removed in whole cells and purified 20S proteasomes.

The protein resides in the cytoplasm. The formation of the proteasomal ATPase PAN-20S proteasome complex, via the docking of the C-termini of PAN into the intersubunit pockets in the alpha-rings, triggers opening of the gate for substrate entry. Interconversion between the open-gate and close-gate conformations leads to a dynamic regulation of the 20S proteasome proteolysis activity. In vitro, the chymotrypsin-like activity of the alpha1-beta proteasome is potently inhibited by carbobenzoxyl-leucinyl-leucinyl-leucinal-H (MG132) and significantly by N-acetyl-leucinyl-leucinyl-norleucinal-H (calpain inhibitor I). Component of the proteasome core, a large protease complex with broad specificity involved in protein degradation. The H.volcanii alpha1-beta proteasome is able to cleave oligopeptides after Phe, Tyr and Trp, poorly after Glu but not after Arg. Thus, displays chymotrypsin-like activity, low caspase-like activity but no trypsin-like activity. The sequence is that of Proteasome subunit alpha 1 from Haloferax volcanii (strain ATCC 29605 / DSM 3757 / JCM 8879 / NBRC 14742 / NCIMB 2012 / VKM B-1768 / DS2) (Halobacterium volcanii).